A 497-amino-acid polypeptide reads, in one-letter code: Serine hydroxymethyltransferase (497 aa).

(6S)-5,6,7,8-tetrahydrofolate-binding positions include Leu176 and 180-182 (GHL). Lys289 is subject to N6-(pyridoxal phosphate)lysine.

This sequence belongs to the SHMT family. As to quaternary structure, homodimer. Pyridoxal 5'-phosphate is required as a cofactor.

It localises to the cytoplasm. The enzyme catalyses (6R)-5,10-methylene-5,6,7,8-tetrahydrofolate + glycine + H2O = (6S)-5,6,7,8-tetrahydrofolate + L-serine. It functions in the pathway one-carbon metabolism; tetrahydrofolate interconversion. It participates in amino-acid biosynthesis; glycine biosynthesis; glycine from L-serine: step 1/1. Functionally, catalyzes the reversible interconversion of serine and glycine with tetrahydrofolate (THF) serving as the one-carbon carrier. This reaction serves as the major source of one-carbon groups required for the biosynthesis of purines, thymidylate, methionine, and other important biomolecules. Also exhibits THF-independent aldolase activity toward beta-hydroxyamino acids, producing glycine and aldehydes, via a retro-aldol mechanism. This Chlamydia caviae (strain ATCC VR-813 / DSM 19441 / 03DC25 / GPIC) (Chlamydophila caviae) protein is Serine hydroxymethyltransferase.